Here is a 206-residue protein sequence, read N- to C-terminus: MPKVIGLTGGIASGKSTVSELLSAHGFKIVDADIASRQAVEKGTKGLERVKESFGEQAIDENGEMNRAYVGEVVFNQPEKRLELNEIVHPIVREIMEKEKAQYLSEGYHVIMDIPLLFENNLQDTVDEVWLVYTSESIQIDRLMERNNISMEEAKARVYSQISIDKKRRMADHEIDNRDTKLELKQNLENLLLEEGYIESHSEDVL.

A DPCK domain is found at V4 to D204. A12–T17 provides a ligand contact to ATP.

This sequence belongs to the CoaE family.

It localises to the cytoplasm. It catalyses the reaction 3'-dephospho-CoA + ATP = ADP + CoA + H(+). It participates in cofactor biosynthesis; coenzyme A biosynthesis; CoA from (R)-pantothenate: step 5/5. Catalyzes the phosphorylation of the 3'-hydroxyl group of dephosphocoenzyme A to form coenzyme A. This chain is Dephospho-CoA kinase, found in Staphylococcus saprophyticus subsp. saprophyticus (strain ATCC 15305 / DSM 20229 / NCIMB 8711 / NCTC 7292 / S-41).